The sequence spans 778 residues: Ribonucleoside-diphosphate reductase large subunit (778 aa).

Residues Ser177, 192-193, Gly221, 419-423, and 613-617 each bind substrate; these read SC, NLCIE, and PTATS. A disulfide bridge connects residues Cys193 and Cys439. Residue Asn419 is the Proton acceptor of the active site. The active-site Cysteine radical intermediate is the Cys421. Glu423 serves as the catalytic Proton acceptor.

It belongs to the ribonucleoside diphosphate reductase large chain family. In terms of assembly, heterotetramer composed of a homodimer of the large subunit (R1) and a homodimer of the small subunit (R2). Larger multisubunit protein complex are also active, composed of (R1)n(R2)n.

The enzyme catalyses a 2'-deoxyribonucleoside 5'-diphosphate + [thioredoxin]-disulfide + H2O = a ribonucleoside 5'-diphosphate + [thioredoxin]-dithiol. With respect to regulation, under complex allosteric control mediated by deoxynucleoside triphosphates and ATP binding. The type of nucleotide bound at the specificity site determines substrate preference. It seems probable that ATP makes the enzyme reduce CDP and UDP, dGTP favors ADP reduction and dTTP favors GDP reduction. Functionally, ribonucleoside-diphosphate reductase holoenzyme provides the precursors necessary for viral DNA synthesis. Allows virus growth in non-dividing cells. Catalyzes the biosynthesis of deoxyribonucleotides from the corresponding ribonucleotides. In African swine fever virus (isolate Tick/South Africa/Pretoriuskop Pr4/1996) (ASFV), this protein is Ribonucleoside-diphosphate reductase large subunit.